The chain runs to 525 residues: GMP synthase [glutamine-hydrolyzing] (525 aa).

Residues 9-207 (RILILDFGSQ…VRDICQCEAL (199 aa)) enclose the Glutamine amidotransferase type-1 domain. Catalysis depends on cysteine 86, which acts as the Nucleophile. Active-site residues include histidine 181 and glutamate 183. The GMPS ATP-PPase domain maps to 208–400 (WTPAKIIDDA…LGLPYDMLYR (193 aa)). 235–241 (SGGVDSS) provides a ligand contact to ATP.

In terms of assembly, homodimer.

It catalyses the reaction XMP + L-glutamine + ATP + H2O = GMP + L-glutamate + AMP + diphosphate + 2 H(+). It functions in the pathway purine metabolism; GMP biosynthesis; GMP from XMP (L-Gln route): step 1/1. Its function is as follows. Catalyzes the synthesis of GMP from XMP. In Shigella boydii serotype 4 (strain Sb227), this protein is GMP synthase [glutamine-hydrolyzing].